Here is a 141-residue protein sequence, read N- to C-terminus: Large-conductance mechanosensitive channel (141 aa).

Transmembrane regions (helical) follow at residues 14–34, 38–58, and 82–102; these read VVDL…VNSL, VIMP…YYIP, and GQFL…FMVI.

It belongs to the MscL family. In terms of assembly, homopentamer.

It is found in the cell inner membrane. Functionally, channel that opens in response to stretch forces in the membrane lipid bilayer. May participate in the regulation of osmotic pressure changes within the cell. The sequence is that of Large-conductance mechanosensitive channel from Methylorubrum extorquens (strain CM4 / NCIMB 13688) (Methylobacterium extorquens).